A 632-amino-acid chain; its full sequence is CREB-regulated transcription coactivator 3 (632 aa).

Residue serine 66 is modified to Phosphoserine. Residues 105–115 (NRLHSSHHRPV) show a composition bias toward basic residues. The tract at residues 105–156 (NRLHSSHHRPVEKHGRQCDSSPYGSVYLSPPPDNNWRRTNSDSALHTSASSS) is disordered. Residue serine 133 is modified to Phosphoserine. At serine 145 the chain carries Phosphoserine; by SIK2. Over residues 145-156 (SDSALHTSASSS) the composition is skewed to low complexity. Threonine 151 bears the Phosphothreonine mark. A Phosphoserine modification is found at serine 293. Polar residues predominate over residues 310–338 (GIQNTCSNPSIQATMNNNVNNHTPPGRNN). The tract at residues 310–455 (GIQNTCSNPS…ESQNFQPPSP (146 aa)) is disordered. Over residues 339–360 (PTLHPSLRLSSLSNPSLPTSAL) the composition is skewed to low complexity. Phosphoserine is present on residues serine 372 and serine 391. The span at 372 to 405 (SPLTLTPGSESNRSISNQFSPTSPMDMLPNSQGV) shows a compositional bias: polar residues. Positions 413-424 (SLPPLEPPPPYP) are enriched in pro residues. Over residues 425–440 (LYTDQPQPQLHHTQQQ) the composition is skewed to low complexity. The residue at position 556 (serine 556) is a Phosphoserine.

This sequence belongs to the TORC family. Binding, as a tetramer, through its N-terminal region, with the bZIP domain of creb1 enhances recruitment of taf4 to the promoter. 'Arg-300' in the bZIP domain of creb1 is essential for this interaction.

It is found in the nucleus. The protein localises to the cytoplasm. Functionally, transcriptional coactivator for creb1 which activates transcription through both consensus and variant cAMP response element (CRE) sites. Acts as a coactivator, in the SIK/TORC signaling pathway, being active when dephosphorylated and acts independently of creb1 'Ser-119' phosphorylation. Enhances the interaction of creb1 with taf4. Regulates the expression of specific CREB-activated genes such as the steroidogenic gene, StAR. Potent coactivator of ppargc1a and inducer of mitochondrial biogenesis in muscle cells. The chain is CREB-regulated transcription coactivator 3 (crtc3) from Xenopus laevis (African clawed frog).